The chain runs to 202 residues: Small ribosomal subunit protein uS4c (202 aa).

The S4 RNA-binding domain occupies 90–159; that stretch reads MRLDNIIFRL…TKNYEFSQTY (70 aa).

This sequence belongs to the universal ribosomal protein uS4 family. Part of the 30S ribosomal subunit. Contacts protein S5. The interaction surface between S4 and S5 is involved in control of translational fidelity.

It localises to the plastid. The protein localises to the chloroplast. In terms of biological role, one of the primary rRNA binding proteins, it binds directly to 16S rRNA where it nucleates assembly of the body of the 30S subunit. With S5 and S12 plays an important role in translational accuracy. This Huperzia lucidula (Shining clubmoss) protein is Small ribosomal subunit protein uS4c (rps4).